We begin with the raw amino-acid sequence, 417 residues long: MKLMDSTLLGRSRFSFFAAMPDSVTQAVSALYDAYPFPPEPMQDGPPPGYNWRWHYPSAYAFCTGRAPQLGRPRILDAGCGTGVSTDYLAHLNPSAEITAIDISAGTLAVAQERCQRSGVADRIHFQQLSLYDVAQLPGEFDQINCVGVLHHLEDPDRGLAALASKLAPGGILHIFVYAEIGRAEIRQMQEAIALLQGERRGDYRDGVAIGREIFSQLPANNRLRRREEERWALENQRDECFADMYVHPQEIDYNTETLRRWIEGSGLTFLGFSDRDRWQPDRLFGSSDTLRDRFQSLSKWQRYRLIELLDPEITHFEFFLGRSPLPQYDWSDNDQLLHAKPVRNECLYGWPSRDIFDPDYRPRTLSEAEYAFLEQCDRPLDSALTVAELLQTSSLDLAAVRQLIDQQLILLVPAQT.

The protein to M.tuberculosis Rv2067c.

This is an uncharacterized protein from Synechococcus sp. (strain ATCC 27144 / PCC 6301 / SAUG 1402/1) (Anacystis nidulans).